A 438-amino-acid polypeptide reads, in one-letter code: Porin AaxA (438 aa).

Residues 1–21 (MISFRFLLLSGLCALGISSYA) form the signal peptide.

The protein belongs to the OprB family.

The protein resides in the cell outer membrane. Functionally, facilitates L-arginine uptake, as part of the AaxABC system. The arginine uptake by the bacterium in the macrophage may be a virulence factor against the host innate immune response. The polypeptide is Porin AaxA (aaxA) (Chlamydia pneumoniae (Chlamydophila pneumoniae)).